Here is a 419-residue protein sequence, read N- to C-terminus: Oxamate carbamoyltransferase subunit AllG (419 aa).

Belongs to the AllG family. As to quaternary structure, the OXTCase is composed of 3 subunits, AllF, AllG and AllH. Mg(2+) is required as a cofactor.

The catalysed reaction is oxamate + carbamoyl phosphate = N-carbamoyl-2-oxoglycine + phosphate. Its pathway is nitrogen metabolism; (S)-allantoin degradation. Its function is as follows. Component of a carbamoyltransferase involved in the anaerobic nitrogen utilization via the assimilation of allantoin. Catalyzes the conversion of oxalurate (N-carbamoyl-2-oxoglycine) to oxamate and carbamoyl phosphate. In Escherichia coli (strain K12), this protein is Oxamate carbamoyltransferase subunit AllG.